Consider the following 1711-residue polypeptide: Reverse gyrase (1711 aa).

The segment at 1–39 adopts an RG N-terminal-type zinc-finger fold; it reads MKAVYREMCPNCWGRISDERLVMRNPCEECLDEPVHADS. Zn(2+) is bound by residues C9, C12, C27, and C30. ATP-binding positions include Q89 and 106-113; that span reads APTGMGKS. The region spanning 93-256 is the Helicase ATP-binding domain; sequence VKRLLKGRSF…RLKKQMSRYL (164 aa). The DEAD box signature appears at 213-216; the sequence is DDVD. Positions 638–1711 are topoisomerase I; that stretch reads DLVRSALMIV…YSEIQRYVSG (1074 aa). Residues 642 to 805 enclose the Toprim domain; the sequence is SALMIVESPN…NIKRIEFHEV (164 aa). E648 is a Mg(2+) binding site. The RG C-terminal-type zinc finger occupies 722–751; that stretch reads LKRCRDCGHQFVDWEKKGVCPRCGSTNVRD. Residues C725, C728, C741, and C744 each coordinate Zn(2+). Position 774 (D774) interacts with Mg(2+). The Topo IA-type catalytic domain occupies 821-1709; sequence NENRVNAQIV…ELYSEIQRYV (889 aa). In terms of domain architecture, DOD-type homing endonuclease spans 1160–1287; it reads VFGLVLGDGT…LSVYLYQIGI (128 aa). Y1452 (O-(5'-phospho-DNA)-tyrosine intermediate) is an active-site residue.

The protein in the N-terminal section; belongs to the DEAD box helicase family. DDVD subfamily. It in the C-terminal section; belongs to the type IA topoisomerase family. Monomer. The cofactor is Zn(2+). It depends on Mg(2+) as a cofactor. Post-translationally, this protein undergoes a protein self splicing that involves a post-translational excision of the intervening region (intein) followed by peptide ligation.

It is found in the cytoplasm. The enzyme catalyses ATP + H2O = ADP + phosphate + H(+). In terms of biological role, modifies the topological state of DNA by introducing positive supercoils in an ATP-dependent process, increasing the linking number in steps of +1. Binds to single-stranded DNA, transiently cleaves and then rejoins the ends, introducing a positive supercoil in the process. The scissile phosphodiester is attacked by the catalytic tyrosine of the enzyme, resulting in the formation of a DNA-(5'-phosphotyrosyl)-enzyme intermediate. Probably involved in rewinding DNA strands in regions of the chromosome that have opened up to allow replication, transcription, DNA repair and/or for DNA protection. In Thermococcus kodakarensis (strain ATCC BAA-918 / JCM 12380 / KOD1) (Pyrococcus kodakaraensis (strain KOD1)), this protein is Reverse gyrase.